Consider the following 351-residue polypeptide: uncharacterized protein (351 aa).

A signal peptide spans 1–27; the sequence is MKNKKRVLIASSLSCAILLLSAATTQA. The interval 29 to 71 is disordered; it reads SAHKDSQDQNKKEHVDKSQQKDKRNVTNKDKNSTVPDDIGKNG. Positions 30–60 are enriched in basic and acidic residues; that stretch reads AHKDSQDQNKKEHVDKSQQKDKRNVTNKDKN.

It belongs to the aerolysin family.

This is an uncharacterized protein from Staphylococcus aureus (strain Mu50 / ATCC 700699).